Reading from the N-terminus, the 459-residue chain is UDP-N-acetylmuramoyl-tripeptide--D-alanyl-D-alanine ligase (459 aa).

Position 121–127 (121–127 (GSSGKTT)) interacts with ATP.

This sequence belongs to the MurCDEF family. MurF subfamily.

The protein localises to the cytoplasm. The enzyme catalyses D-alanyl-D-alanine + UDP-N-acetyl-alpha-D-muramoyl-L-alanyl-gamma-D-glutamyl-meso-2,6-diaminopimelate + ATP = UDP-N-acetyl-alpha-D-muramoyl-L-alanyl-gamma-D-glutamyl-meso-2,6-diaminopimeloyl-D-alanyl-D-alanine + ADP + phosphate + H(+). It functions in the pathway cell wall biogenesis; peptidoglycan biosynthesis. Its function is as follows. Involved in cell wall formation. Catalyzes the final step in the synthesis of UDP-N-acetylmuramoyl-pentapeptide, the precursor of murein. This chain is UDP-N-acetylmuramoyl-tripeptide--D-alanyl-D-alanine ligase, found in Treponema pallidum (strain Nichols).